Here is a 444-residue protein sequence, read N- to C-terminus: Ribosomal protein uS12 methylthiotransferase RimO (444 aa).

One can recognise an MTTase N-terminal domain in the interval 1 to 117; the sequence is MKVGIISLGC…ITEVISSALK (117 aa). [4Fe-4S] cluster is bound by residues cysteine 10, cysteine 46, cysteine 80, cysteine 154, cysteine 158, and cysteine 161. Residues 140-370 enclose the Radical SAM core domain; it reads YQPGPSAYIK…WEVQKEITRK (231 aa). Residues 373 to 441 enclose the TRAM domain; that stretch reads EGLVGTEMRV…DYDLIGEMTN (69 aa).

It belongs to the methylthiotransferase family. RimO subfamily. It depends on [4Fe-4S] cluster as a cofactor.

The protein resides in the cytoplasm. It carries out the reaction L-aspartate(89)-[ribosomal protein uS12]-hydrogen + (sulfur carrier)-SH + AH2 + 2 S-adenosyl-L-methionine = 3-methylsulfanyl-L-aspartate(89)-[ribosomal protein uS12]-hydrogen + (sulfur carrier)-H + 5'-deoxyadenosine + L-methionine + A + S-adenosyl-L-homocysteine + 2 H(+). In terms of biological role, catalyzes the methylthiolation of an aspartic acid residue of ribosomal protein uS12. The sequence is that of Ribosomal protein uS12 methylthiotransferase RimO from Natranaerobius thermophilus (strain ATCC BAA-1301 / DSM 18059 / JW/NM-WN-LF).